Reading from the N-terminus, the 455-residue chain is tRNA modification GTPase MnmE (455 aa).

Arg-22, Glu-85, and Arg-124 together coordinate (6S)-5-formyl-5,6,7,8-tetrahydrofolate. Positions 220 to 377 (GIYTVIVGRP…VEKAIKEAIL (158 aa)) constitute a TrmE-type G domain. Asn-230 lines the K(+) pocket. Residues 230-235 (NVGKSS), 249-255 (TDIPGTT), and 274-277 (DTAG) each bind GTP. Ser-234 contributes to the Mg(2+) binding site. Residues Thr-249, Ile-251, and Thr-254 each coordinate K(+). Residue Thr-255 coordinates Mg(2+). Lys-455 contributes to the (6S)-5-formyl-5,6,7,8-tetrahydrofolate binding site.

Belongs to the TRAFAC class TrmE-Era-EngA-EngB-Septin-like GTPase superfamily. TrmE GTPase family. In terms of assembly, homodimer. Heterotetramer of two MnmE and two MnmG subunits. The cofactor is K(+).

The protein resides in the cytoplasm. Functionally, exhibits a very high intrinsic GTPase hydrolysis rate. Involved in the addition of a carboxymethylaminomethyl (cmnm) group at the wobble position (U34) of certain tRNAs, forming tRNA-cmnm(5)s(2)U34. The polypeptide is tRNA modification GTPase MnmE (Caldicellulosiruptor saccharolyticus (strain ATCC 43494 / DSM 8903 / Tp8T 6331)).